A 130-amino-acid chain; its full sequence is Small ribosomal subunit protein uS17m (130 aa).

This sequence belongs to the universal ribosomal protein uS17 family. Component of the mitochondrial ribosome small subunit (28S) which comprises a 12S rRNA and about 30 distinct proteins.

It is found in the mitochondrion. This is Small ribosomal subunit protein uS17m (MRPS17) from Bos taurus (Bovine).